The primary structure comprises 119 residues: MFILAEVSDFILDIVAPLCPTISEACLTKHSIRKCTSEGTLSGESWSLSEWLSASFRATRLISASSCSSLVSSPFFLLSVLGETSTVVGVVVIDGFVVSVDIIELKSITERLFNAALDD.

The next 2 membrane-spanning stretches (helical) occupy residues 61–80 and 87–103; these read LISA…LLSV and VVGV…VDII.

It is found in the membrane. This is an uncharacterized protein from Saccharomyces cerevisiae (strain ATCC 204508 / S288c) (Baker's yeast).